Consider the following 470-residue polypeptide: MASDAPPTSMLQPEERNYSQVVFSRVEQSYVPGIDIICYFTYTSGFHPAKKDWVGIFKVSWKTTREYYTWVSADCEEQGLEKRVTFKAYYLPKESDDYYQFCYVDQKGEVRGVSIPFQLCRKIQDEGEEDILLVTTEEEAQGMKEKQRVLEEKVAALEKDKCTLQDECTQLALEQKNKAALIESLQAQQLECAKKNEELDQQNQELERQLEEEKCKNGSLHLKVVSAEEERERVQNDIRSLQLEQNQLKEENMELHKHTNDMEFSLKKYSEEAKNQEEEVQELKDKLWDAEAKHHLLQVQLQDIQMEKKKDKYSIELLTKEAEKVADLRQNLEKKDKTMETMEKQLAQLQRENATVLRQMEDLSYTLELRKAEISDMQQQRVRDGAEIEHLNRLLTEQSSSTPRNQGLFFQNPYESESLISFANEPQPGEAPGGSSVRHVQMQCPECGSEFENFQVFQDHIFCHDLESTE.

Residues 131 to 134 (ILLV) carry the CLIR motif. Residues 132–368 (LLVTTEEEAQ…QMEDLSYTLE (237 aa)) are a coiled coil. Positions 201–204 (QQNQ) match the LIR-like motif. A UBZ1-type zinc finger spans residues 441–464 (QMQCPECGSEFENFQVFQDHIFCH). Zn(2+) contacts are provided by Cys444, Cys447, His460, and His464.

The protein belongs to the CALCOCO family.

It localises to the cytoplasm. It is found in the perinuclear region. The protein resides in the cytoskeleton. The protein localises to the cytoplasmic vesicle. Its subcellular location is the autophagosome membrane. Functionally, xenophagy-specific receptor required for autophagy-mediated intracellular bacteria degradation. Acts as an effector protein of galectin-sensed membrane damage that restricts the proliferation of infecting pathogens upon entry into the cytosol by targeting galectin-associated bacteria for autophagy. Initially orchestrates bacteria targeting to autophagosomes and subsequently ensures pathogen degradation by regulating pathogen-containing autophagosome maturation. May play a role in ruffle formation and actin cytoskeleton organization and seems to negatively regulate constitutive secretion. The protein is Calcium-binding and coiled-coil domain-containing protein 2 of Xenopus tropicalis (Western clawed frog).